The following is a 190-amino-acid chain: MSSSPAVKGLTDEEQKTLEPVIKTYHQFEPDPTTCTSLITQRIHAPASVVWPLIRRFDNPERYKHFVKRCRLISGDGDVGSVREVTVISGLPASTSTERLEFVDDDHRVLSFRVVGGEHRLKNYKSVTSVNEFLNQDSGKVYTVVLESYTVDIPEGNTEEDTKMFVDTVVKLNLQKLGVAATSAPMHDDE.

Residues 28–182 (FEPDPTTCTS…NLQKLGVAAT (155 aa)) are START-like. Abscisate contacts are provided by residues Lys-64, 93-98 (ASTSTE), 120-126 (RLKNYKS), and Glu-147. Residues 89–93 (SGLPA) carry the Gate loop motif. Residues 119-121 (HRL) carry the Latch loop motif.

This sequence belongs to the PYR/PYL/RCAR abscisic acid intracellular receptor family. In terms of assembly, homodimer. Binds ABA on one subunit only. Interacts with HAB1, ABI1 and ABI2, and possibly with other PP2Cs. Binds to CARs protein in an ABA-independent manner, both at the plasma membrane and in the nucleus.

The protein resides in the cytoplasm. It localises to the nucleus. Its subcellular location is the cell membrane. Its function is as follows. Receptor for abscisic acid (ABA) required for ABA-mediated responses such as stomatal closure and germination inhibition. Inhibits the activity of group-A protein phosphatases type 2C (PP2Cs) when activated by ABA. Can be activated by both (-)-ABA and (+)-ABA. The sequence is that of Abscisic acid receptor PYL2 (PYL2) from Arabidopsis thaliana (Mouse-ear cress).